The chain runs to 68 residues: Protein SlyX homolog (68 aa).

It belongs to the SlyX family.

This chain is Protein SlyX homolog, found in Pseudomonas syringae pv. syringae (strain B728a).